We begin with the raw amino-acid sequence, 137 residues long: ATP synthase epsilon chain, chloroplastic (137 aa).

The protein belongs to the ATPase epsilon chain family. In terms of assembly, F-type ATPases have 2 components, CF(1) - the catalytic core - and CF(0) - the membrane proton channel. CF(1) has five subunits: alpha(3), beta(3), gamma(1), delta(1), epsilon(1). CF(0) has three main subunits: a, b and c.

The protein resides in the plastid. Its subcellular location is the chloroplast thylakoid membrane. In terms of biological role, produces ATP from ADP in the presence of a proton gradient across the membrane. This chain is ATP synthase epsilon chain, chloroplastic, found in Medicago sativa (Alfalfa).